A 251-amino-acid polypeptide reads, in one-letter code: 5'-nucleotidase SurE (251 aa).

A divalent metal cation contacts are provided by D8, D9, S39, and N95.

It belongs to the SurE nucleotidase family. A divalent metal cation is required as a cofactor.

It localises to the cytoplasm. It carries out the reaction a ribonucleoside 5'-phosphate + H2O = a ribonucleoside + phosphate. Nucleotidase that shows phosphatase activity on nucleoside 5'-monophosphates. In Clostridium botulinum (strain Alaska E43 / Type E3), this protein is 5'-nucleotidase SurE.